A 529-amino-acid chain; its full sequence is Cytochrome P450 monooxygenase okaD (529 aa).

A helical membrane pass occupies residues 13-35; that stretch reads LPAQHLLASLALVGALLSVGYLL. Residue Cys-435 participates in heme binding.

The protein belongs to the cytochrome P450 family. Heme serves as cofactor.

The protein localises to the membrane. The catalysed reaction is okaramine C + 2 reduced [NADPH--hemoprotein reductase] + 2 O2 = okaramine A + 2 oxidized [NADPH--hemoprotein reductase] + 4 H2O + 2 H(+). Its pathway is alkaloid biosynthesis. In terms of biological role, cytochrome P450 monooxygenase; part of the gene cluster that mediates the biosynthesis of okaramine B, a prenylated indole alkaloid that possesses an unusual octacyclic ring system, including a four-membered azetidine ring and an eight-membered azocine ring, and that exhibits insecticidal activity against silkworm larvae. Within the pathway, okaD likely catalyzes a key step in forming the eight-membered ring of okaramine A using as substrate okaramine C. The biosynthesis begins with the NRPS okaA that condenses two tryptophan molecules into cyclo(L-Trp-L-Trp). Prenylation by the prenyltransferase okaC then leads to the formation of cyclo(N8-(alpha,alpha-dimethylallyl)-L-Trp-6a-(alpha,alpha-dime-thylallyl)-L-Trp). This is followed by indole 2,3-epoxidation by the FAD-dependent monooxygenase okaB to facilitate the formation of the hexahydropyrrolo[2,3-b]indole (HPI) moiety of okaramine C. The cytochrome P450 monooxygenase okaD then likely catalyzes formation of the eight-membered ring of okaramine A. The dioxygenase okaE further forms the unusual 2-dimethyl-3-methyl-azetidine ring to yield 12-deshydroxyl okaramine E, as well as the hydroxylation of 12-deshydroxyl okaramine E to produce okaramine E. The cytochrome P450 monoxygenase okaG converts 12-deshydroxyl okaramine E into 3-desmethyl okaramine B which is further methylated by the methyltransferase okaF into okaramine B. In a shunt pathway, okaG and okaF together are also able to convert okaramine E into okaramine D. Okaramine H is produced by nonenzymatic conversion from okaramine A. The polypeptide is Cytochrome P450 monooxygenase okaD (Penicillium ochrochloron).